The following is a 249-amino-acid chain: Protection of telomeres protein poz1 (249 aa).

As to quaternary structure, interacts with pot1, rap1 and tpz1.

The protein localises to the cytoplasm. Its subcellular location is the nucleus. It is found in the chromosome. It localises to the telomere. Telomeric DNA-binding protein that negatively regulates telomerase and telomere length. The sequence is that of Protection of telomeres protein poz1 (poz1) from Schizosaccharomyces pombe (strain 972 / ATCC 24843) (Fission yeast).